The primary structure comprises 142 residues: Mitochondrial import receptor subunit TOM22 homolog (142 aa).

The span at 1 to 11 shows a compositional bias: low complexity; that stretch reads MAAAVAAAGAG. The segment at 1–40 is disordered; the sequence is MAAAVAAAGAGEPLSPEELVPKAEAEKAEEDLEEDDDDEL. Alanine 2 is modified (N-acetylalanine). Residues 2–82 are Cytoplasmic-facing; the sequence is AAAVAAAGAG…VAQKMYRFSR (81 aa). The residue at position 15 (serine 15) is a Phosphoserine. Over residues 27 to 40 the composition is skewed to acidic residues; that stretch reads KAEEDLEEDDDDEL. Residues 41 to 50 are import sequence; necessary for mitochondrion outer membrane localization and integration in the TOM complex; the sequence is DETLSERLWG. Phosphothreonine is present on threonine 43. Serine 45 bears the Phosphoserine mark. A helical transmembrane segment spans residues 83–103; sequence AALWIGTTSFMILVLPVVFET. The interval 83-103 is TMD; necessary for mitochondrion outer membrane localization and integration in the TOM complex; the sequence is AALWIGTTSFMILVLPVVFET. Over 104 to 142 the chain is Mitochondrial intermembrane; sequence EKLQMEQQQQLQQRQILLGPNTGLSGGMPGALPPLPGKI. The segment at 123-142 is C-tail signal; necessary for mitochondrion outer membrane localization and integration in the TOM complex; the sequence is PNTGLSGGMPGALPPLPGKI.

It belongs to the Tom22 family. As to quaternary structure, forms part of the preprotein translocase complex of the outer mitochondrial membrane (TOM complex) which consists of at least 7 different proteins (TOMM5, TOMM6, TOMM7, TOMM20, TOMM22, TOMM40 and TOMM70). Interacts with TOMM40. Interacts with PPP2R2B.

The protein resides in the mitochondrion outer membrane. Functionally, central receptor component of the translocase of the outer membrane of mitochondria (TOM complex) responsible for the recognition and translocation of cytosolically synthesized mitochondrial preproteins. Together with the peripheral receptor TOM20 functions as the transit peptide receptor and facilitates the movement of preproteins into the translocation pore. Required for the translocation across the mitochondrial outer membrane of cytochrome P450 monooxygenases. This is Mitochondrial import receptor subunit TOM22 homolog (Tomm22) from Rattus norvegicus (Rat).